The following is a 65-amino-acid chain: DNA-directed RNA polymerase subunit Rpo10 (65 aa).

Residues Cys-7, Cys-10, Cys-44, and Cys-45 each coordinate Zn(2+).

It belongs to the archaeal Rpo10/eukaryotic RPB10 RNA polymerase subunit family. As to quaternary structure, part of the RNA polymerase complex. It depends on Zn(2+) as a cofactor.

The protein localises to the cytoplasm. The enzyme catalyses RNA(n) + a ribonucleoside 5'-triphosphate = RNA(n+1) + diphosphate. In terms of biological role, DNA-dependent RNA polymerase (RNAP) catalyzes the transcription of DNA into RNA using the four ribonucleoside triphosphates as substrates. This is DNA-directed RNA polymerase subunit Rpo10 from Pyrococcus furiosus (strain ATCC 43587 / DSM 3638 / JCM 8422 / Vc1).